Reading from the N-terminus, the 418-residue chain is MRPQATLTVLPVERPLVGRVSPPGSKSITNRALLLAGLAKGTSRLTGALKSDDTRVMSEALRLMGVQVDEPDDSTFVVTSSGHWQAPQQALFLGNAGTATRFLTAALANFEGDFVVDGDEYMRKRPIGPLVDALQRMGVEVSAPSGCPPVAIKGKGGLEAGRIEIDGNLSSQYVSALLMAGACGKGPVEVALTGSEIGARGYVDLTLAAMQAFGAEVQAIGETAWKVSATGYRATDFHIEPDASAATYLWAAQALTEGDIDLGVASDAFTQPDALASQIIASFPNMPAVIDGSQMQDAIPTLAVLAAFNRQPVRFVGIANLRVKECDRISALSHGLCAIAPGLAVEEGDDLLVHANPALAGTTVDALIDTHSDHRIAMCFALAGLKIAGIRILDPDCVGKTYPGYWDALASLGVRVQR.

3-phosphoshikimate-binding residues include Lys-26, Ser-27, and Arg-31. Lys-26 is a phosphoenolpyruvate binding site. The phosphoenolpyruvate site is built by Gly-97 and Arg-125. 6 residues coordinate 3-phosphoshikimate: Ser-170, Ser-171, Gln-172, Asp-297, Asn-320, and Lys-324. Phosphoenolpyruvate is bound at residue Gln-172. Asp-297 functions as the Proton acceptor in the catalytic mechanism. 3 residues coordinate phosphoenolpyruvate: Arg-328, Arg-375, and Lys-400.

Belongs to the EPSP synthase family. As to quaternary structure, monomer.

The protein localises to the cytoplasm. It catalyses the reaction 3-phosphoshikimate + phosphoenolpyruvate = 5-O-(1-carboxyvinyl)-3-phosphoshikimate + phosphate. The protein operates within metabolic intermediate biosynthesis; chorismate biosynthesis; chorismate from D-erythrose 4-phosphate and phosphoenolpyruvate: step 6/7. In terms of biological role, catalyzes the transfer of the enolpyruvyl moiety of phosphoenolpyruvate (PEP) to the 5-hydroxyl of shikimate-3-phosphate (S3P) to produce enolpyruvyl shikimate-3-phosphate and inorganic phosphate. This Pseudomonas savastanoi pv. phaseolicola (strain 1448A / Race 6) (Pseudomonas syringae pv. phaseolicola (strain 1448A / Race 6)) protein is 3-phosphoshikimate 1-carboxyvinyltransferase.